We begin with the raw amino-acid sequence, 661 residues long: MPANEDAPQPGEHGSACEVSVSFEDVTVDFSREEWQQLDSTQRRLYQDVMLENYSHLLSVGFEVPKPEVIFKLEQGEGPWTLEGEAPHQSCSDGKFGIKPSQRRISGKSTFHSEMEGEDTRDDSLYSILEELWQDAEQIKRCQEKHNKLLSRTTFLNKKILNTEWDYEYKDFGKFVHPSPNLILSQKRPHKRDSFGKSFKHNLDLHIHNKSNAAKNLDKTIGHGQVFTQNSSYSHHENTHTGVKFCERNQCGKVLSLKHSLSQNVKFPIGEKANTCTEFGKIFTQRSHFFAPQKIHTVEKPHELSKCVNVFTQKPLLSIYLRVHRDEKLYICTKCGKAFIQNSELIMHEKTHTREKPYKCNECGKSFFQVSSLLRHQTTHTGEKLFECSECGKGFSLNSALNIHQKIHTGERHHKCSECGKAFTQKSTLRMHQRIHTGERSYICTQCGQAFIQKAHLIAHQRIHTGEKPYECSDCGKSFPSKSQLQMHKRIHTGEKPYICTECGKAFTNRSNLNTHQKSHTGEKSYICAECGKAFTDRSNFNKHQTIHTGEKPYVCADCGRAFIQKSELITHQRIHTTEKPYKCPDCEKSFSKKPHLKVHQRIHTGEKPYICAECGKAFTDRSNFNKHQTIHTGDKPYKCSDCGKGFTQKSVLSMHRNIHT.

The 72-residue stretch at Val-21–Ser-92 folds into the KRAB domain. Residue Lys-266 forms a Glycyl lysine isopeptide (Lys-Gly) (interchain with G-Cter in SUMO2) linkage. 12 C2H2-type zinc fingers span residues Tyr-330–His-352, Tyr-358–His-380, Phe-386–His-408, His-414–His-436, Tyr-442–His-464, Tyr-470–His-492, Tyr-498–His-520, Tyr-526–His-548, Tyr-554–His-576, Tyr-582–His-604, Tyr-610–His-632, and Tyr-638–His-660.

It belongs to the krueppel C2H2-type zinc-finger protein family.

The protein resides in the nucleus. In terms of biological role, may be involved in transcriptional regulation. In Homo sapiens (Human), this protein is Zinc finger protein 81 (ZNF81).